A 117-amino-acid chain; its full sequence is Structural toxin peptide sea anemone type 9a (117 aa).

The N-terminal stretch at 1–23 is a signal peptide; sequence MKTIIAIFSLAAMIVLVRPTPLE. Repeat copies occupy residues 28 to 56, 57 to 88, and 89 to 117. The segment at 29–117 is 3 X approximate tandem repeats; it reads RSIINVPCKK…GKCRKIHGCS (89 aa).

In terms of processing, contains 6 disulfide bonds. In terms of tissue distribution, expressed outside of acontia.

The protein localises to the secreted. Its subcellular location is the nematocyst. In terms of biological role, putative neurotoxin. This chain is Structural toxin peptide sea anemone type 9a, found in Calliactis polypus (Hermit crab anemone).